Here is a 694-residue protein sequence, read N- to C-terminus: Elongation factor G (694 aa).

In terms of domain architecture, tr-type G spans glutamate 8–threonine 287. GTP-binding positions include alanine 17–threonine 24, aspartate 86–histidine 90, and asparagine 140–aspartate 143.

Belongs to the TRAFAC class translation factor GTPase superfamily. Classic translation factor GTPase family. EF-G/EF-2 subfamily.

It localises to the cytoplasm. In terms of biological role, catalyzes the GTP-dependent ribosomal translocation step during translation elongation. During this step, the ribosome changes from the pre-translocational (PRE) to the post-translocational (POST) state as the newly formed A-site-bound peptidyl-tRNA and P-site-bound deacylated tRNA move to the P and E sites, respectively. Catalyzes the coordinated movement of the two tRNA molecules, the mRNA and conformational changes in the ribosome. This is Elongation factor G from Brucella melitensis biotype 2 (strain ATCC 23457).